We begin with the raw amino-acid sequence, 620 residues long: 1-deoxy-D-xylulose-5-phosphate synthase (620 aa).

Thiamine diphosphate contacts are provided by residues histidine 80 and 121–123; that span reads GHS. Aspartate 152 contacts Mg(2+). Residues 153 to 154, asparagine 181, tyrosine 288, and glutamate 370 contribute to the thiamine diphosphate site; that span reads GA. Asparagine 181 is a Mg(2+) binding site.

This sequence belongs to the transketolase family. DXPS subfamily. In terms of assembly, homodimer. Mg(2+) is required as a cofactor. The cofactor is thiamine diphosphate.

It catalyses the reaction D-glyceraldehyde 3-phosphate + pyruvate + H(+) = 1-deoxy-D-xylulose 5-phosphate + CO2. It functions in the pathway metabolic intermediate biosynthesis; 1-deoxy-D-xylulose 5-phosphate biosynthesis; 1-deoxy-D-xylulose 5-phosphate from D-glyceraldehyde 3-phosphate and pyruvate: step 1/1. In terms of biological role, catalyzes the acyloin condensation reaction between C atoms 2 and 3 of pyruvate and glyceraldehyde 3-phosphate to yield 1-deoxy-D-xylulose-5-phosphate (DXP). The polypeptide is 1-deoxy-D-xylulose-5-phosphate synthase (Salmonella paratyphi A (strain ATCC 9150 / SARB42)).